Reading from the N-terminus, the 12345-residue chain is Muscle-specific protein 300 kDa (12345 aa).

2 disordered regions span residues 1–68 and 121–152; these read MADS…STVT and WSDGSSPVKRPAEQSSDELRLTDDQDEYDAEN. Residues 1 to 12295 are Cytoplasmic-facing; it reads MADSGGPGSK…GARFLGRVAR (12295 aa). Residues 19 to 28 are compositionally biased toward gly residues; that stretch reads AGGGGAGAAG. A compositionally biased stretch (basic and acidic residues) spans 45–60; sequence EQKSSREQVLEEEKSQ. Residues 249 to 273 form an LRR 1 repeat; it reads FKELENFLEGERTVREVPSADGVRT. Disordered regions lie at residues 295–325, 387–488, and 504–526; these read EGYVSPRDSPSWSRSSYSSERSSVTPPRSVD, TVQV…RKLI, and GKSNASDNDIDIDNDSDTEGRPA. Positions 299–321 are enriched in low complexity; sequence SPRDSPSWSRSSYSSERSSVTPP. Composition is skewed to polar residues over residues 387-404 and 414-434; these read TVQVGGGNRTSPQDSTPQ and TTKTMLTSTPIGTKEQPQTGP. A compositionally biased stretch (low complexity) spans 462 to 484; sequence TITSTTTKSTSSSTSATSSSSTS. Residues 511–520 show a composition bias toward acidic residues; it reads NDIDIDNDSD. Calponin-homology (CH) domains are found at residues 630–737 and 777–882; these read RVQK…LYFQ and QGAR…HKYP. The stretch at 823-847 is one LRR 2 repeat; it reads LVNLAELKKTSNRQRLETAFDVAES. The stretch at 919-952 is one TPR 1 repeat; that stretch reads SSFPRDFGEYLLARSEVDAHLAAYNRLKQLIESQ. 3 LRR repeats span residues 1089–1112, 1389–1411, and 1616–1642; these read CCLIAFLNLVENKMRGWTGKYGHE, HLFHQLQIQQESLEAGQKEIHQW, and LKDVEKELQLEQQALNRNEDVDSILQR. The stretch at 1603–1636 is one TPR 2 repeat; the sequence is LEFRLDENAFYQSLKDVEKELQLEQQALNRNEDV. The HAT 1 repeat unit spans residues 1903–1935; that stretch reads TGWNQAYTETSDKLQALKGTQAVWSEFVDQKND. 2 LRR repeats span residues 2087–2109 and 2558–2581; these read KQLDLLAADASELAPKEGNIAEA and QQQIQQMTVRKDKFHALEHNFGQA. The region spanning 2109-2233 is the Calponin-homology (CH) 3 domain; the sequence is AKRLKGEITK…SRWTAVHENA (125 aa). A TPR 3 repeat occupies 2663–2696; sequence ADRIQKYNLISQALREYADSKDKFSKELKKAEDL. The interval 2699–2724 is disordered; the sequence is AIPQQPRDETELHQASEKTRKTMEQL. Positions 2704 to 2724 are enriched in basic and acidic residues; it reads PRDETELHQASEKTRKTMEQL. 3 LRR repeats span residues 2728–2751, 2935–2959, and 3030–3053; these read KLSLDELERRGNNVGKLFSAIGEP, CRALRGELDNSGNEIDNIKQKVDEL, and SSDKYNLDVKKSSLQEVSKSIDDC. The stretch at 2894-2962 forms a coiled coil; it reads EQELRRRSKE…KQKVDELRNL (69 aa). One copy of the Spectrin 1 repeat lies at 3110 to 3207; sequence LWSQYEQSNE…AVSKALTSYI (98 aa). The stretch at 3346–3379 is one TPR 4 repeat; it reads KAKVPTTDELYPTLATKKAALQNYKTQLQEITLH. LRR repeat units follow at residues 3370 to 3393, 3437 to 3462, 3530 to 3556, and 3611 to 3634; these read KTQLQEITLHKNALKQLHDKAVTL, LEKAQDWLNTIKSEAIDILNETTFEK, LVKLKQLCSKWDEFDTIIEELDNWMKN, and NLKLSRLNTRYQTLKNLCKESIAK. A Spectrin 2 repeat occupies 3539-3633; sequence KWDEFDTIIE…LKNLCKESIA (95 aa). The stretch at 3629-3662 is one TPR 5 repeat; it reads KESIAKYVNYVKDHESFDKDFDSFKQNLQSSVDE. One copy of the HAT 2 repeat lies at 3706–3739; the sequence is KLYGHTSPEGREIIRQQLRALRTLWDNYTDDLNS. Residues 3748 to 3771 form an LRR 15 repeat; it reads LLQFNEFSIAQDQLTKWLKDVDKA. A Spectrin 3 repeat occupies 4177–4273; it reads SYQDILNQTV…YDQVGQDCAK (97 aa). A TPR 6 repeat occupies 4360 to 4393; sequence EVMARDLANLHADFEKFGASLSDVKSGLENRLQQ. Residues 4371-4403 form an HAT 3 repeat; it reads ADFEKFGASLSDVKSGLENRLQQWNDYEINLDR. Residues 4611–4701 form a Spectrin 4 repeat; sequence FDEIADSLKS…GKLQKRAQNY (91 aa). 2 LRR repeats span residues 4654–4676 and 4742–4763; these read NDINNHQVELGNLQEIAANLPEK and EQISLHTNLDRLKNLKASLADE. An HAT 4 repeat occupies 4799–4830; it reads EWESLLTTISSTIEAIEARLQHWSEYEQLRDQ. The stretch at 4820–4919 is one Spectrin 5 repeat; it reads HWSEYEQLRD…VKELNNRWQQ (100 aa). One copy of the LRR 18 repeat lies at 4839–4863; the sequence is DNNLHAIDLKEDLPKKRAQLDALKA. The stretch at 4894–4926 is one HAT 5 repeat; that stretch reads ASGPELVTKYQQIFHKVKELNNRWQQYVTSHED. LRR repeat units lie at residues 5266–5289 and 5333–5357; these read QIDILVKNHKLNLCPNLPEKEKQV and SSVYQVQVNLAKDVLKKVETNRDQH. The stretch at 5645-5678 is one TPR 7 repeat; the sequence is SAEPEDCEIIEQEVALLQEEFDAYREALNKAKDY. LRR repeat units follow at residues 5761–5784, 5820–5843, and 5979–6002; these read SNAIMQLTTKYNALLTLAKEVMRR, PGTLNEVQIKLNTVKNLRQGFETG, and TKFDDLQTQVNKIIESLENQVNSH. The Spectrin 6 repeat unit spans residues 5791-5895; sequence EHQQHHSLYE…DLNDVRQKLA (105 aa). The stretch at 6088-6120 is one HAT 6 repeat; that stretch reads SEWETLQTISRDARSSLESCLAAWQTFLQKFNK. Spectrin repeat units lie at residues 6321–6405 and 6424–6530; these read RWND…DKLK and AYHQ…RLLE. 2 coiled-coil regions span residues 6356 to 6397 and 6454 to 6484; these read MKTL…VNRL and REQTQEQIKQHEALLVEIQKYQTNLDDLNAK. Residues 6363 to 6387 form an LRR 24 repeat; the sequence is YKTLSNELKLKGNELEQLQSEARDL. A TPR 8 repeat occupies 6522 to 6555; the sequence is VQIKNRLLESLAKFQEYEDTLDSIMRNLETYEPI. LRR repeat units lie at residues 6531-6554 and 6560-6587; these read SLAKFQEYEDTLDSIMRNLETYEP and LDAPATSLELAQNQLRCAQEMQNKLNNE. Residues 6567 to 6597 adopt a coiled-coil conformation; sequence LELAQNQLRCAQEMQNKLNNEKSRLAAAVQA. A disordered region spans residues 6631–6657; that stretch reads EDLLDQKPPPKTRSSTGGVSTDDDKDE. The stretch at 6660–6695 is one TPR 9 repeat; it reads VEIQVELSDVNEALLDPIAHERVKNYRRIVRLNSAH. An LRR 27 repeat occupies 7004-7026; sequence SALRNLNTENRNLSGVLKAELDR. The stretch at 7161–7195 is one TPR 10 repeat; it reads EMETATEGELRTTSLPVLEEQLAHYKKLLSDAENK. LRR repeat units lie at residues 7219–7242, 7300–7318, 7319–7339, and 7340–7361; these read LKLNDDIKNMKDRYGRIKNTIDDR, KELKDSKSKMGDMQMDDLP, ELQSILAQQDDMIKLIEDQLA, and HLRQLLLLREQFIALINEIIAF. Residues 7419–7457 adopt a coiled-coil conformation; that stretch reads KNSITEQLQSLKNQLQNLRKAVESQRQKHQLQLESHKKM. Residues 7524–7547 form an LRR 32 repeat; sequence SSLLEMLSEGRSLVASLPHELEER. Residues 7644–7676 form an HAT 7 repeat; it reads TKLTNTLANAKTQQSELEKEAERWREYQQSIDR. A TPR 11 repeat occupies 7654-7687; sequence KTQQSELEKEAERWREYQQSIDRVKATIERTKFV. LRR repeat units follow at residues 7692 to 7714, 7752 to 7777, and 7816 to 7840; these read QNLAGLHFNIQKLSHAIGNVQSQ, QDLVRSLEQRRDNLQQLAEHWDGFEN, and LREESNQLKSSHKEIEALSKSILTF. The TPR 12 repeat unit spans residues 7759-7792; it reads EQRRDNLQQLAEHWDGFENSLHAWEKALGRLEDK. Positions 7799-7935 form a coiled coil; it reads TVRSRRHLED…NSQVQQAAEE (137 aa). The stretch at 7878–7911 is one TPR 13 repeat; it reads SKDLEEIEQVFRRISQLQDKLNALHEQLQSVHVY. LRR repeat units follow at residues 8178–8201, 8238–8264, 8298–8321, and 8354–8377; these read KISVEAVLLERNSLLQEACEEWDQ, EKTLADINVQKTKLRLSIEKLEVHFRN, EQTLAQIDVYQQQMQSLRQRIIQE, and DELLQSLSSVEDGIANMNQSSLDG. The stretch at 8431–8464 is one TPR 14 repeat; the sequence is QQGITMIANAMHGQKKRQQEIDEYQQHLLELEQW. An LRR 40 repeat occupies 8534 to 8557; it reads EQLQSIITILREQVTVATKRIFTI. 6 disordered regions span residues 8583 to 8616, 8966 to 9023, 9131 to 9158, 9361 to 9459, 9502 to 9735, and 9769 to 9797; these read IKPPTEAPASPEAHESIESNENTIDSSSMPEEEI, QKPT…LPAP, EFEPQSPHEESTKSDLVKPQETEPQVVA, GKES…PDSD, LVED…TSIS, and TMQLPKQEKKSKKDKKKKQKNVPEVEQQL. A compositionally biased stretch (polar residues) spans 8601 to 8611; the sequence is SNENTIDSSSM. Positions 8982-9011 are enriched in low complexity; sequence TQVTTTTRTTTATTQEQEQPEQQTQPTTTE. Residues 9136 to 9151 are compositionally biased toward basic and acidic residues; it reads SPHEESTKSDLVKPQE. The span at 9394-9404 shows a compositional bias: basic residues; the sequence is KRRRKKKKRRD. The segment covering 9410–9419 has biased composition (acidic residues); the sequence is ELEQEQETEP. The segment covering 9420–9439 has biased composition (low complexity); sequence EPVAAVKEPEVSSDVPVSPE. Residues 9440-9451 show a composition bias toward basic and acidic residues; it reads DSPRDTVRHESI. 3 stretches are compositionally biased toward polar residues: residues 9544-9563, 9587-9597, and 9605-9625; these read AVQTSLEVQPDNQENESQTL, ISTTEIQTDVS, and EISSQTTVTTTIEKELQTTPK. The segment covering 9658–9680 has biased composition (low complexity); the sequence is TSEQSTVTETTTTTETHVQTTTP. Residues 9681-9698 are compositionally biased toward basic and acidic residues; that stretch reads EPREQTEVIKPETAHEET. Residues 9699-9721 form an LRR 41 repeat; the sequence is STVELVQFADGEMQTTPPGDQQP. A compositionally biased stretch (polar residues) spans 9711-9735; sequence MQTTPPGDQQPASLDDSSLTATSIS. Positions 9777 to 9788 are enriched in basic residues; that stretch reads KKSKKDKKKKQK. LRR repeat units follow at residues 9995–10019, 10073–10096, 10252–10276, and 10353–10376; these read SNVLHLATLSEQIKELPTEQRILEV, EEKLDNYNQLNDELSTIKQNVVQL, KEFTKITVLADKLVESPIVSSSLEQ, and RDELQWLQVAQQRVPDLSAVTSAD. 2 coiled-coil regions span residues 10072 to 10099 and 10172 to 10257; these read SEEKLDNYNQLNDELSTIKQNVVQLERQ and LSAK…FTKI. Residues 10231 to 10264 form a TPR 15 repeat; it reads QAERERVLQLQSLAEEYEQTLKEFTKITVLADKL. Residues 10426–10458 form an HAT 8 repeat; sequence IVLLKLREEVALYLHRLLVFKEIWVQYEQQTDK. LRR repeat units follow at residues 10512 to 10535, 10570 to 10593, and 10644 to 10667; these read EKSLQVIPLADEMLQRQFHAQLED, ERELQEIYLTMTSMKGVIKNEEEL, and AEELEGASVLRDQLQAIQEGISNQ. The stretch at 10854 to 10888 is one TPR 16 repeat; it reads VVAWNDTSENLQQLRTRYQRAVELWDKYRNASAAV. Residues 10855-10887 form an HAT 9 repeat; sequence VAWNDTSENLQQLRTRYQRAVELWDKYRNASAA. LRR repeat units follow at residues 10907–10929 and 11021–11043; these read DALQHAKVCQDNLTTQNDRILEL and AHLQTLARTEEQLRQLKERHQNS. The stretch at 11016–11046 forms a coiled coil; it reads LAALRAHLQTLARTEEQLRQLKERHQNSEVA. The stretch at 11070 to 11104 is one HAT 10 repeat; that stretch reads DTFQEYHRLSTRLARSQNSSEALRLWRQYLQHVQS. One copy of the TPR 17 repeat lies at 11072–11105; sequence FQEYHRLSTRLARSQNSSEALRLWRQYLQHVQSF. Residues 11197–11222 form an LRR 51 repeat; it reads EAERNALQLRYIHLKRVPHLKHRLDA. 2 coiled-coil regions span residues 11220–11247 and 11281–11308; these read LDAMIQQLDQGEQQSKALQEQQQELARH and LQRVTQLSESYEQRVNQLQQEFGAAQKL. 5 LRR repeats span residues 11342–11365, 11398–11422, 11670–11692, 11697–11720, and 11744–11766; these read SALESLTVTQEELKECISPHDMKT, LSNYQIRYDRISQWLQRLEQRVEKD, EELESQSVNLRQLEQIYAKLAMS, PENIQKLTLPTKVMVSMWRQLTPR, and EATNSLNAIQKALEQLPSAENQQ. Residues 11655-11685 adopt a coiled-coil conformation; that stretch reads KHKLEERQMELRAKLEELESQSVNLRQLEQI. Residues 11776 to 11806 adopt a coiled-coil conformation; that stretch reads LQRLESLEKKLQDAQQHVQQADNLAQEAKTR. The HAT 11 repeat unit spans residues 11804-11836; sequence KTRTKQQPQLKQLLELVSAYTTLWQTVQTRIVT. LRR repeat units lie at residues 11959-11981 and 12198-12220; these read DTVAELTLRFDTLQSQWKARQQH and SRLTDLRLRLQSLRRLSGIYIVK. Residues 12253–12272 form a disordered region; sequence SMQAAAPNTENANNTDGGDA. Low complexity predominate over residues 12256 to 12267; that stretch reads AAAPNTENANNT. The region spanning 12287–12345 is the KASH domain; that stretch reads ARFLGRVARASLPIQALMLLLLGVATLVPHGEDYTCMFSNTFARSLEPMLSYPHGPPPT. The helical; Anchor for type IV membrane protein transmembrane segment at 12296-12316 threads the bilayer; it reads ASLPIQALMLLLLGVATLVPH. One copy of the LRR 59 repeat lies at 12301-12323; that stretch reads QALMLLLLGVATLVPHGEDYTCM. Over 12317-12345 the chain is Perinuclear space; that stretch reads GEDYTCMFSNTFARSLEPMLSYPHGPPPT.

This sequence belongs to the nesprin family. Core component of LINC complexes which are composed of inner nuclear membrane SUN domain-containing proteins coupled to outer nuclear membrane KASH domain-containing nesprins. Interacts with klar; this interaction allows the anchoring of the Msp300 nuclear ring structure to the nuclear envelope. Interacts with sls; this interaction mediates the recruitment of Msp300 to the Z-disks.

The protein localises to the nucleus membrane. The protein resides in the cytoplasm. Its subcellular location is the myofibril. It is found in the sarcomere. It localises to the z line. The protein localises to the cytoskeleton. The protein resides in the microtubule organizing center. Its subcellular location is the perinuclear region. Functionally, component of the LINC (LInker of Nucleoskeleton and Cytoskeleton) complex involved in the connection between the nuclear lamina and the cytoskeleton. Collaborates with Klar to promote even spacing of the myonuclei at the periphery of striated muscle fibers by mediating a tight association between a nuclear ring structure of Msp300 and the plus ends of a unique astral MT network. In addition, is essential for anchoring nuclei, mitochondria and endoplasmic reticulum (ER) structures to the Z-disks. In fat body cells, part of perinuclear non-centrosomal microtubule-organizing centers (ncMTOCs) which function to accommodate the organization of microtubule (MT) networks to control nuclear positioning and dynein motor-based retrograde endosomal trafficking. Functions as the primary organizer of the ncMTOC by recruiting Patronin, shot and msps to the organizing centre. Within the ncMTOC, Msp300 and shot anchors the ncMTOC at the nuclear surface and recruits the MT minus-end regulators Patronin and Nin for assembly, anchoring and/or stabilization of circumferential and radial MTs at the ncMTOCs. Patronin, and perhaps Nin, recruits msps to the ncMTOC for the gamma-tubulin-independent elongation of radial MTs. The chain is Muscle-specific protein 300 kDa from Drosophila melanogaster (Fruit fly).